Reading from the N-terminus, the 205-residue chain is Guanylate kinase (205 aa).

Residues 6–185 (GLLIVLSGPS…ACERIKAIVV (180 aa)) enclose the Guanylate kinase-like domain. 13 to 20 (GPSGVGKG) contacts ATP.

It belongs to the guanylate kinase family.

The protein localises to the cytoplasm. The catalysed reaction is GMP + ATP = GDP + ADP. Functionally, essential for recycling GMP and indirectly, cGMP. The sequence is that of Guanylate kinase from Bacillus anthracis.